The following is a 349-amino-acid chain: DCD domain-containing protein NRP (349 aa).

Residues 157 to 201 (NNNKNKGIDEDHQIQKGGKKNRKNQQNNNNQRNEDDKNNGLDKRF) form a disordered region. The segment covering 188 to 201 (RNEDDKNNGLDKRF) has biased composition (basic and acidic residues). A DCD domain is found at 214–346 (ETIGGYIFVC…VLSLLDIFAD (133 aa)).

Interacts with CRY2 in the cytoplasm. Interacts with Verticillium dahliae PevD1. Interacts with FYPP3. Highly expressed in sensecent leaves, cauline leaves and sepals. Expressed in the shoot apical meristem, leaf veins, central cylinder, root hair zone, root tips, rosette leaves, flowers and siliques.

Its subcellular location is the cytoplasm. In terms of biological role, contributes to the initial phase of responses to abiotic and biotic stress signals. Binds FYPP3 and facilitates FYPP3 degradation to promote abscisic acid (ABA) response. The polypeptide is DCD domain-containing protein NRP (Arabidopsis thaliana (Mouse-ear cress)).